A 218-amino-acid chain; its full sequence is Non-structural protein NS3 (218 aa).

Belongs to the orbivirus NS3 family.

Functionally, may play a role in the release of virions from infected cells. This is Non-structural protein NS3 (Segment-10) from Camelus dromedarius (Dromedary).